The chain runs to 167 residues: MPRSQRNDNFIDKTFTIVADILLRVIPTTQREKEAFTYYRDGMSAQSEGEYAEALQNYYEAMRLEIDPYDRSYILYNIGLIHTSNGEHAKAIEYYLQALERNPSLPQAFNNMAVICHYRGEQAVEKEDLETSEAWFDQAADYWKQAIALAPNNYIEAQNWLKNTRRL.

3 TPR repeats span residues 35–68, 72–105, and 120–153; these read AFTYYRDGMSAQSEGEYAEALQNYYEAMRLEIDP, SYILYNIGLIHTSNGEHAKAIEYYLQALERNPSL, and GEQAVEKEDLETSEAWFDQAADYWKQAIALAPNN.

Belongs to the Ycf3 family.

The protein resides in the plastid. It is found in the chloroplast thylakoid membrane. Functionally, essential for the assembly of the photosystem I (PSI) complex. May act as a chaperone-like factor to guide the assembly of the PSI subunits. The sequence is that of Photosystem I assembly protein Ycf3 from Zygnema circumcarinatum (Green alga).